A 95-amino-acid chain; its full sequence is Progonadoliberin-1 (95 aa).

Positions Met-1–Cys-23 are cleaved as a signal peptide. Gln-24 bears the Pyrrolidone carboxylic acid mark. Residue Gly-33 is modified to Glycine amide.

This sequence belongs to the GnRH family.

The protein localises to the secreted. Stimulates the secretion of gonadotropins. The protein is Progonadoliberin-1 (gnrh1) of Pagrus major (Red sea bream).